Consider the following 160-residue polypeptide: Transcription antitermination protein NusB (160 aa).

The protein belongs to the NusB family.

Involved in transcription antitermination. Required for transcription of ribosomal RNA (rRNA) genes. Binds specifically to the boxA antiterminator sequence of the ribosomal RNA (rrn) operons. The polypeptide is Transcription antitermination protein NusB (Sinorhizobium medicae (strain WSM419) (Ensifer medicae)).